We begin with the raw amino-acid sequence, 703 residues long: Protein CNGC15c (703 aa).

Over residues 1-10 (MGFDNPRSER) the composition is skewed to basic and acidic residues. Residues 1–23 (MGFDNPRSERFEDDPEISKIPTT) are disordered. The next 5 membrane-spanning stretches (helical) occupy residues 91–111 (IFLV…YLPV), 179–199 (GFWL…WIII), 216–236 (FFII…SSQI), 255–275 (LMLY…LSIE), and 372–392 (FIGE…LFAL). Residue 480 to 565 (LFDQMDERML…WALDPRPSVI (86 aa)) participates in a nucleoside 3',5'-cyclic phosphate binding. Positions 616 to 644 (RTWAACFIQAAWRRHKKRKEAAELRAKEN) constitute an IQ domain. The segment at 676–703 (KGVNMHSGTNSGVVSSLQKPTEPDFSDE) is disordered. Positions 681–694 (HSGTNSGVVSSLQK) are enriched in polar residues.

It belongs to the cyclic nucleotide-gated cation channel (TC 1.A.1.5) family. Interacts (via N-terminus) with DMI1 (via c-terminus). The Nod factor has no effect on this interaction, implying that the complex is maintained after activation. Expressed in roots, stems, leaves, flowers and pods.

Its subcellular location is the nucleus membrane. Its function is as follows. Cyclic nucleotide-gated channel involved in the establishment of both rhizobial and mycorrhizal associations. Required for full activation of nuclear-localized Ca(2+) oscillations by Nod and Myc factors. Simultaneous activation of the K(+)-permeable channel DMI1 and the Ca(2+) channel CNGC15 can give rise to sustained Ca(2+) oscillations. May function during fertilization in both female and male gametophytic Ca(2+) signaling. This is Protein CNGC15c from Medicago truncatula (Barrel medic).